A 1124-amino-acid chain; its full sequence is tRNA (34-2'-O)-methyltransferase regulator WDR6 (1124 aa).

At Met1 the chain carries N-acetylmethionine. 19 WD repeats span residues 53–97, 105–143, 147–189, 200–238, 247–285, 289–327, 335–376, 381–422, 425–470, 476–520, 557–596, 602–640, 643–682, 743–789, 852–897, 905–950, 974–1015, 1039–1076, and 1082–1124; these read MKRV…IVKI, RELW…LYDP, CSLQ…VWYP, VPDR…IWKV, RVQN…VWSH, ILQA…LWHL, SGVF…LYDL, WEQL…VVPI, PTAA…ISAA, IFVK…LYPS, PMST…FVRG, VLRQ…VWSP, HEKL…LYRA, LIDI…VWGV, RHRH…LFLL, QLLA…FWDL, GSPC…VFVL, EEYS…FWRL, and TFMN…NWYD.

It belongs to the WD repeat WDR6 family. In terms of assembly, interacts with FTSJ1; the interaction is direct, and required for 2'-O-methylation of position 34 in substrate tRNAs. Interacts with IRS4. Interacts with STK11/LKB1.

Its subcellular location is the cytoplasm. In terms of biological role, together with methyltransferase FTSJ1, methylates the 2'-O-ribose of nucleotides at position 34 of the tRNA anticodon loop of substrate tRNAs. Required for the correct positioning of the substrate tRNA for methylation. Required to suppress amino acid starvation-induced autophagy. Enhances the STK11/LKB1-induced cell growth suppression activity. The polypeptide is tRNA (34-2'-O)-methyltransferase regulator WDR6 (WDR6) (Bos taurus (Bovine)).